A 41-amino-acid chain; its full sequence is Large ribosomal subunit protein bL32c (41 aa).

It belongs to the bacterial ribosomal protein bL32 family.

The protein resides in the plastid. The sequence is that of Large ribosomal subunit protein bL32c (rpl32) from Helicosporidium sp. subsp. Simulium jonesii (Green alga).